The primary structure comprises 63 residues: Conotoxin Vi5.1b (63 aa).

The signal sequence occupies residues 1–22 (MLCVPVFIILFIIIPFAPTSES). Positions 23–50 (QPKTKEEVAKASVHDNAERTLQRLWNQS) are excised as a propeptide. Pro62 is subject to Proline amide.

Belongs to the conotoxin T superfamily. Post-translationally, contains 2 disulfide bonds that can be either 'C1-C3, C2-C4' or 'C1-C4, C2-C3', since these disulfide connectivities have been observed for conotoxins with cysteine framework V (for examples, see AC P0DQQ7 and AC P81755). In terms of tissue distribution, expressed by the venom duct.

Its subcellular location is the secreted. The polypeptide is Conotoxin Vi5.1b (Conus virgo (Virgin cone)).